We begin with the raw amino-acid sequence, 379 residues long: Alkanesulfonate monooxygenase (379 aa).

The protein belongs to the SsuD family.

It carries out the reaction an alkanesulfonate + FMNH2 + O2 = an aldehyde + FMN + sulfite + H2O + 2 H(+). Catalyzes the desulfonation of aliphatic sulfonates. The protein is Alkanesulfonate monooxygenase of Pseudomonas syringae pv. syringae (strain B728a).